A 230-amino-acid polypeptide reads, in one-letter code: Flagellar L-ring protein (230 aa).

An N-terminal signal peptide occupies residues 1 to 22; it reads MSPISNFARIALACTVAALLGG. Cys23 carries N-palmitoyl cysteine lipidation. Cys23 is lipidated: S-diacylglycerol cysteine.

This sequence belongs to the FlgH family. The basal body constitutes a major portion of the flagellar organelle and consists of four rings (L,P,S, and M) mounted on a central rod.

The protein localises to the cell outer membrane. It is found in the bacterial flagellum basal body. Functionally, assembles around the rod to form the L-ring and probably protects the motor/basal body from shearing forces during rotation. The polypeptide is Flagellar L-ring protein (Stenotrophomonas maltophilia (strain K279a)).